A 940-amino-acid chain; its full sequence is UvrABC system protein A (940 aa).

Glycine 31–serine 38 is a binding site for ATP. A C4-type zinc finger spans residues cysteine 252–cysteine 279. ABC transporter domains follow at residues tryptophan 309–leucine 586 and arginine 606–lysine 936. Residue glycine 639 to serine 646 coordinates ATP. The C4-type zinc-finger motif lies at cysteine 739–cysteine 765.

Belongs to the ABC transporter superfamily. UvrA family. Forms a heterotetramer with UvrB during the search for lesions.

Its subcellular location is the cytoplasm. In terms of biological role, the UvrABC repair system catalyzes the recognition and processing of DNA lesions. UvrA is an ATPase and a DNA-binding protein. A damage recognition complex composed of 2 UvrA and 2 UvrB subunits scans DNA for abnormalities. When the presence of a lesion has been verified by UvrB, the UvrA molecules dissociate. The protein is UvrABC system protein A of Vibrio vulnificus (strain YJ016).